A 106-amino-acid chain; its full sequence is UPF0145 protein CPF_0876 (106 aa).

This sequence belongs to the UPF0145 family.

This Clostridium perfringens (strain ATCC 13124 / DSM 756 / JCM 1290 / NCIMB 6125 / NCTC 8237 / Type A) protein is UPF0145 protein CPF_0876.